A 68-amino-acid chain; its full sequence is ATP synthase F(0) complex subunit 8 (68 aa).

The chain crosses the membrane as a helical span at residues 8 to 24; that stretch reads VWPTIITSMLLTLFLLM. Position 54 is an N6-acetyllysine; alternate (K54). At K54 the chain carries N6-succinyllysine; alternate. Position 57 is an N6-acetyllysine (K57).

The protein belongs to the ATPase protein 8 family. Component of the ATP synthase complex composed at least of ATP5F1A/subunit alpha, ATP5F1B/subunit beta, ATP5MC1/subunit c (homooctomer), MT-ATP6/subunit a, MT-ATP8/subunit 8, ATP5ME/subunit e, ATP5MF/subunit f, ATP5MG/subunit g, ATP5MK/subunit k, ATP5MJ/subunit j, ATP5F1C/subunit gamma, ATP5F1D/subunit delta, ATP5F1E/subunit epsilon, ATP5PF/subunit F6, ATP5PB/subunit b, ATP5PD/subunit d, ATP5PO/subunit OSCP. ATP synthase complex consists of a soluble F(1) head domain (subunits alpha(3) and beta(3)) - the catalytic core - and a membrane F(0) domain - the membrane proton channel (subunits c, a, 8, e, f, g, k and j). These two domains are linked by a central stalk (subunits gamma, delta, and epsilon) rotating inside the F1 region and a stationary peripheral stalk (subunits F6, b, d, and OSCP). Interacts with PRICKLE3.

It is found in the mitochondrion membrane. In terms of biological role, subunit 8, of the mitochondrial membrane ATP synthase complex (F(1)F(0) ATP synthase or Complex V) that produces ATP from ADP in the presence of a proton gradient across the membrane which is generated by electron transport complexes of the respiratory chain. ATP synthase complex consist of a soluble F(1) head domain - the catalytic core - and a membrane F(1) domain - the membrane proton channel. These two domains are linked by a central stalk rotating inside the F(1) region and a stationary peripheral stalk. During catalysis, ATP synthesis in the catalytic domain of F(1) is coupled via a rotary mechanism of the central stalk subunits to proton translocation. In vivo, can only synthesize ATP although its ATP hydrolase activity can be activated artificially in vitro. Part of the complex F(0) domain. This is ATP synthase F(0) complex subunit 8 from Symphalangus syndactylus (Siamang).